Here is a 167-residue protein sequence, read N- to C-terminus: SsrA-binding protein (167 aa).

Residues glycine 137 to alanine 167 are disordered. Residues glutamine 139–arginine 158 show a composition bias toward basic and acidic residues.

This sequence belongs to the SmpB family.

The protein resides in the cytoplasm. Required for rescue of stalled ribosomes mediated by trans-translation. Binds to transfer-messenger RNA (tmRNA), required for stable association of tmRNA with ribosomes. tmRNA and SmpB together mimic tRNA shape, replacing the anticodon stem-loop with SmpB. tmRNA is encoded by the ssrA gene; the 2 termini fold to resemble tRNA(Ala) and it encodes a 'tag peptide', a short internal open reading frame. During trans-translation Ala-aminoacylated tmRNA acts like a tRNA, entering the A-site of stalled ribosomes, displacing the stalled mRNA. The ribosome then switches to translate the ORF on the tmRNA; the nascent peptide is terminated with the 'tag peptide' encoded by the tmRNA and targeted for degradation. The ribosome is freed to recommence translation, which seems to be the essential function of trans-translation. This chain is SsrA-binding protein, found in Xanthomonas campestris pv. campestris (strain 8004).